The sequence spans 541 residues: MNPSTAQATAVVDELVRGGVREVVLCPGSRNAPLAFALQAADLEGRLRLHMRIDERTAGFLALGLAVAGKRPVPIVMTSGTAVANLGPAVLEANYARVPLVVLSANRPYEMLGTGANQTIEQLGLFGSQVRATISLGLAEDDAGQNSQWRSAVCRVLAAARGTRSGNAGPVHFDIPLREPLVPDVHAQGPVPQGRPGGAAWTTTQHATLDVAMDLDITPDTIVISGHGSALRPELAGLPTVAEPTAPLHGIPVHPMALPQLKPRQAVITGRPTLHRSVSKVLADPAVAVYALTTGPRWPDVSGNVLATGTRAVVTGAPDRAWINRCRTLSEHTDKAVRAQLAAHPKATGLHVAAAVMDALTDGDQLLLGASNPVRDAALVSYPAPKVRVLSNRGVAGIDGTVSAAVGAALAYEEGRTVALLGDLTFLHDASGLLIGSGEPRPRDLTIVVANDDGGGIFELLEQGDPQYAGVFERVFGTPHGMDLAALCAAYRVEHHLVGLGELSTLLSTPDAPGDRGIRVLEVTTERSGLRELHAAVRAQL.

It belongs to the TPP enzyme family. MenD subfamily. In terms of assembly, homodimer. Requires Mg(2+) as cofactor. The cofactor is Mn(2+). Thiamine diphosphate serves as cofactor.

It carries out the reaction isochorismate + 2-oxoglutarate + H(+) = 5-enolpyruvoyl-6-hydroxy-2-succinyl-cyclohex-3-ene-1-carboxylate + CO2. It participates in quinol/quinone metabolism; 1,4-dihydroxy-2-naphthoate biosynthesis; 1,4-dihydroxy-2-naphthoate from chorismate: step 2/7. Its pathway is quinol/quinone metabolism; menaquinone biosynthesis. Its function is as follows. Catalyzes the thiamine diphosphate-dependent decarboxylation of 2-oxoglutarate and the subsequent addition of the resulting succinic semialdehyde-thiamine pyrophosphate anion to isochorismate to yield 2-succinyl-5-enolpyruvyl-6-hydroxy-3-cyclohexene-1-carboxylate (SEPHCHC). The chain is 2-succinyl-5-enolpyruvyl-6-hydroxy-3-cyclohexene-1-carboxylate synthase from Rhodococcus opacus (strain B4).